The primary structure comprises 423 residues: Calcium up-regulated protein A (423 aa).

Residues 1–19 (MINIEDISKSSNESEEKQL) are compositionally biased toward basic and acidic residues. The interval 1–27 (MINIEDISKSSNESEEKQLKSTSTSSK) is disordered. Ricin B-type lectin domains are found at residues 27 to 147 (KPKY…WTTF) and 118 to 251 (QGNG…WGIN).

This sequence belongs to the cup family.

The protein localises to the cytoplasm. The protein resides in the membrane. In terms of biological role, may play an important role in stabilizing and/or regulating the cell membrane during Ca(2+) stress or certain stages of development. The chain is Calcium up-regulated protein A (cupA) from Dictyostelium discoideum (Social amoeba).